A 652-amino-acid chain; its full sequence is Apicoplast pyruvate carrier 2 (652 aa).

Over 1-45 the chain is Cytoplasmic; it reads MSAFPASPQPSAFPASPQPSAFPASPQPSASPVSPRHCVSPSSGT. The segment at 1–53 is disordered; sequence MSAFPASPQPSAFPASPQPSAFPASPQPSASPVSPRHCVSPSSGTLPSSSSPS. 12 helical membrane passes run 46 to 66, 126 to 146, 167 to 187, 189 to 209, 212 to 232, 278 to 298, 345 to 365, 385 to 405, 417 to 437, 445 to 465, 467 to 487, and 515 to 535; these read LPSSSSPSVSSCALRGLSSSS, NLLPYLIGFIRNAQATSAVSY, GTTLEKKAGTKKTAFLGSAWM, LGLALCGVCTHDLSLFLIAYG, TALGCGVAYPVPLAATLKLSP, LPYLSSVASDTASASRLSSLN, LVDPERTSAADEAAADAAERQ, SCSASQVFASLVLTPQDICSS, LSWQSLFFVQLFWKVLPLYPE, AAPAPLDSLFASVVRRVPRAL, SASRPDPRALHAAADAWSLTG, and LWGYIGGGIGYMRSTVVMNAL. Topologically, residues 536 to 652 are cytoplasmic; that stretch reads TAPCLFALST…LPYRFPTYSP (117 aa).

It belongs to the major facilitator superfamily. In terms of assembly, interacts with apicoplast pyruvate carrier 1.

It is found in the plastid. The protein localises to the apicoplast. Its subcellular location is the membrane. Functionally, along with apicoplast pyruvate carrier 1, forms apicoplast pyruvate carrier (APC) complex, which transports pyruvate into the apicoplast and may also transport amino acids like methionine, serine, glycine and tryptophan with low efficiency. Required for maintaining pyruvate-dependent metabolic activities in the apicoplast, such as synthesis of fatty acids, isopentenyl pyrophosphate (IPP), dimethylallyl pyrophosphate (DMAPP) and methylerythritol 4-phosphate (MEP). Required for maintaining the integrity of the apicoplast. Required for normal parasite growth. The protein is Apicoplast pyruvate carrier 2 of Toxoplasma gondii.